The primary structure comprises 250 residues: Ubiquinone/menaquinone biosynthesis C-methyltransferase UbiE (250 aa).

S-adenosyl-L-methionine contacts are provided by residues Thr74, Asp94, 122-123 (DA), and Ser139.

The protein belongs to the class I-like SAM-binding methyltransferase superfamily. MenG/UbiE family.

The catalysed reaction is a 2-demethylmenaquinol + S-adenosyl-L-methionine = a menaquinol + S-adenosyl-L-homocysteine + H(+). It catalyses the reaction a 2-methoxy-6-(all-trans-polyprenyl)benzene-1,4-diol + S-adenosyl-L-methionine = a 5-methoxy-2-methyl-3-(all-trans-polyprenyl)benzene-1,4-diol + S-adenosyl-L-homocysteine + H(+). Its pathway is quinol/quinone metabolism; menaquinone biosynthesis; menaquinol from 1,4-dihydroxy-2-naphthoate: step 2/2. It functions in the pathway cofactor biosynthesis; ubiquinone biosynthesis. Functionally, methyltransferase required for the conversion of demethylmenaquinol (DMKH2) to menaquinol (MKH2) and the conversion of 2-polyprenyl-6-methoxy-1,4-benzoquinol (DDMQH2) to 2-polyprenyl-3-methyl-6-methoxy-1,4-benzoquinol (DMQH2). This is Ubiquinone/menaquinone biosynthesis C-methyltransferase UbiE from Roseobacter denitrificans (strain ATCC 33942 / OCh 114) (Erythrobacter sp. (strain OCh 114)).